Here is a 248-residue protein sequence, read N- to C-terminus: DNA repair protein RecO (248 aa).

The protein belongs to the RecO family.

Functionally, involved in DNA repair and RecF pathway recombination. The polypeptide is DNA repair protein RecO (Thermoanaerobacter sp. (strain X514)).